Here is a 177-residue protein sequence, read N- to C-terminus: Retrograde regulation protein 1 (177 aa).

Positions 1–24 (MSSIPAGTDPGSCGANFKNDRKRR) are disordered. Residues 11 to 96 (GSCGANFKND…TQAVEYISHL (86 aa)) enclose the bHLH domain. 2 positions are modified to phosphoserine: Ser-50 and Ser-52. 2 disordered regions span residues 52 to 82 (SNDTLSESTPGALGLSSKAKGTGTKDGKPNK) and 147 to 177 (LAATNDDSVRPPAKRLSSFEYGGYGEYGNGS). Thr-60 is modified (phosphothreonine). Residues 168–177 (GGYGEYGNGS) are compositionally biased toward gly residues.

As to quaternary structure, binds DNA as a heterodimer with RTG3.

It is found in the nucleus. Required for a novel path of interorganelle communication between mitochondria, peroxisomes and the nucleus, thereby maintaining a functional metabolic interaction between the tricarboxylic acid and glyoxylate cycles. Transcription factor that regulates CIT2 gene expression. Binds to two identical sites oriented as inverted repeats 28 bp apart in a regulatory upstream activation sequence element (UASR) in the CIT2 promoter. The core binding site is 5'-GGTCAC-3'. The polypeptide is Retrograde regulation protein 1 (RTG1) (Saccharomyces cerevisiae (strain ATCC 204508 / S288c) (Baker's yeast)).